Reading from the N-terminus, the 955-residue chain is MKLPGQEELEAACACENVPVGQLDSGPSSGPCPDDPSDTGSRELGPPEDPPLFLQLNELLGWPQTLEWREMGRWVLFEEKLEVDAGRWSAPHVPTLALPSLQNLRSLLAEGLVLLDCPAQNLLELVEQVTRVESLSPELRGQLQALLLQRPQHHTQTTGSRPCWGPAQSRKAAHNKEAPMQQQCQSPLRQKLPPGAEAGAVLAGELGFLAQPLAAFVRLRDPVWLGPLTEVPLPSRFFCLLLGPPMLGKGYHELGRAAAVLLSDPHFQWSVRRASNLHDLLTALDAFLEEVTVLPPGRWDPTARIPPPRCLPSRHKRPPLHLQKVKGLSVPHRTQAEDRHRNGPLAPSPELQRTGRLFGGLVQDVRRKASWYPSDFSDALHPQCVSAVLYIYLATVTNAITFGGLLGDATDGAQGVLESLLGTAVAGAAFCLMAGQPLTVLSSTGPVLVFERLLFAFCRDYSLDYLPFRLWVGIWVAVFCLALVATEASVLVRYFTRFTEEGFCALISLIFIYDAVGKMLNLAHAYPIQRPGSLAYGCLCQFPGPGGNESQWTRPRPQSRDDLLSVDLGLVNASLLPPHECVQQGGYPRGPGCHTVPDIAFFSLLLFLTSFLFAIALKHMKTSRFFPSVVRKVLSDFSSILAILLGCGLDALLGLAMPKLMVPREFKPTLPGRGWLVPPFGANPWWLSVAAALPALLLSILIFMDQQITAVILNRVEYRLRKGAGFHLDLFCVALLMLLTSVLGLPWYVSATVLSLAHMDSLRRESRACAPGEPHSFLGIREQRLTGLAVFTLTGVSIFLAPVLKFIPMPVLYGIFLYMGVAALSSIQFMKRVQLMLMPAKHQPDLLLLRHVPLSRVHLFTAIQLACLGLLWIIKSTPAAIIFPLMLLGLVGVRKALEWVFSPQELLWLDELMPEEERNVPEKGLEPGHSFSGSDSEDSELMYQPKAPEINISVN.

Disordered regions lie at residues 20–50 (VGQL…PEDP), 154–190 (HTQT…PLRQ), and 331–352 (PHRT…PELQ). 4 helical membrane-spanning segments follow: residues 387–407 (AVLY…GLLG), 415–435 (GVLE…LMAG), 472–492 (VGIW…SVLV), and 503–523 (FCAL…LNLA). Positions 387–955 (AVLYIYLATV…KAPEINISVN (569 aa)) are membrane (anion exchange). N-linked (GlcNAc...) asparagine glycosylation is found at Asn548 and Asn572. 7 consecutive transmembrane segments (helical) span residues 596-616 (VPDI…FAIA), 637-657 (FSSI…GLAM), 684-704 (PWWL…LIFM), 730-750 (LFCV…WYVS), 785-804 (LTGL…APVL), 811-830 (VLYG…IQFM), and 871-891 (LWII…LGLV). The disordered stretch occupies residues 918–955 (RNVPEKGLEPGHSFSGSDSEDSELMYQPKAPEINISVN). Asn951 carries an N-linked (GlcNAc...) asparagine glycan.

This sequence belongs to the anion exchanger (TC 2.A.31) family. As to expression, highly expressed in kidney. Expressed in the outer medulla and the inner medulla in the kidney cortex. Only expressed in beta-intercalated cells.

It localises to the lateral cell membrane. It is found in the apical cell membrane. The protein resides in the basolateral cell membrane. The enzyme catalyses 2 hydrogencarbonate(out) + chloride(in) + Na(+)(out) = 2 hydrogencarbonate(in) + chloride(out) + Na(+)(in). The catalysed reaction is K(+)(in) + 2 hydrogencarbonate(in) + chloride(out) = K(+)(out) + 2 hydrogencarbonate(out) + chloride(in). It catalyses the reaction Li(+)(in) + 2 hydrogencarbonate(in) + chloride(out) = Li(+)(out) + 2 hydrogencarbonate(out) + chloride(in). It carries out the reaction Rb(+)(in) + 2 hydrogencarbonate(in) + chloride(out) = Rb(+)(out) + 2 hydrogencarbonate(out) + chloride(in). The enzyme catalyses Cs(+)(in) + 2 hydrogencarbonate(in) + chloride(out) = Cs(+)(out) + 2 hydrogencarbonate(out) + chloride(in). Electroneutral Cl(-)/HCO3(-) antiporter that favors chloride ion entry and efflux of hydrogencarbonate and sodium ion across the basolateral membrane and may participat in salivary secretion. Also mediates Cl(-)/HCO3(-) exchange activity in the presence of K(+) as well as Cs(+), Li(+), and Rb(+). Does not contribute to Cl(-)/HCO3(-) exchanger in the apical membrane of the upper villous epithelium. The chain is Anion exchange protein 4 from Oryctolagus cuniculus (Rabbit).